Consider the following 424-residue polypeptide: Serine hydroxymethyltransferase 2 (424 aa).

Residues L125 and 129–131 (GHL) each bind (6S)-5,6,7,8-tetrahydrofolate. The residue at position 234 (K234) is an N6-(pyridoxal phosphate)lysine. E250 contacts (6S)-5,6,7,8-tetrahydrofolate.

It belongs to the SHMT family. As to quaternary structure, homodimer. Pyridoxal 5'-phosphate serves as cofactor.

The protein resides in the cytoplasm. The catalysed reaction is (6R)-5,10-methylene-5,6,7,8-tetrahydrofolate + glycine + H2O = (6S)-5,6,7,8-tetrahydrofolate + L-serine. It participates in one-carbon metabolism; tetrahydrofolate interconversion. Its pathway is amino-acid biosynthesis; glycine biosynthesis; glycine from L-serine: step 1/1. Catalyzes the reversible interconversion of serine and glycine with tetrahydrofolate (THF) serving as the one-carbon carrier. This reaction serves as the major source of one-carbon groups required for the biosynthesis of purines, thymidylate, methionine, and other important biomolecules. Also exhibits THF-independent aldolase activity toward beta-hydroxyamino acids, producing glycine and aldehydes, via a retro-aldol mechanism. The polypeptide is Serine hydroxymethyltransferase 2 (Burkholderia pseudomallei (strain 1710b)).